Reading from the N-terminus, the 704-residue chain is Cystathionine beta-synthase cbs-1 (704 aa).

Residues asparagine 454, 562–566, and serine 652 contribute to the pyridoxal 5'-phosphate site; that span reads GTGGT.

This sequence belongs to the cysteine synthase/cystathionine beta-synthase family. In terms of assembly, monomer. Does not bind pyridoxal 5'-phosphate, PLP; which may explain why this isoform has virtually undetectable catalytic activity. Requires pyridoxal 5'-phosphate as cofactor.

The protein resides in the cytoplasm. The catalysed reaction is L-homocysteine + L-serine = L,L-cystathionine + H2O. It functions in the pathway amino-acid biosynthesis; L-cysteine biosynthesis; L-cysteine from L-homocysteine and L-serine: step 1/2. Its function is as follows. Hydro-lyase catalyzing the first step of the transsulfuration pathway, where the hydroxyl group of L-serine is displaced by L-homocysteine in a beta-replacement reaction to form L-cystathionine, the precursor of L-cysteine. Plays a role in maintaining homocysteine homeostasis. Involved in cold-induced somatic longevity mediated by prostaglandin E2 (PGE2) signals from adult germ cells, perhaps acting via a role in the production of hydrogen sulfide (H2S). Required for normal development. This is Cystathionine beta-synthase cbs-1 from Caenorhabditis elegans.